A 621-amino-acid chain; its full sequence is MPGFYEIVIKVPSDLDGHLPGISDSFVNWVAEKEWELPPDSDMDLNLIEQAPLTVAEKLQRDFLTEWRRVSKAPEALFFVQFEKGESYFHMHVLVETTGVKSMVLGRFLSQIREKLIQRIYRGIEPTLPNWFAVTKTRNGAGGGNKVVDECYIPNYLLPKTQPELQWAWTNMEQYLSACLNLTERKRLVAQHLTHVSQTQEQNKENQNPNSDAPVIRSKTSARYMELVGWLVDKGITSEKQWIQEDQASYISFNAASNSRSQIKAALDNAGKIMSLTKTAPDYLVGQQPVEDISSNRIYKILELNGYDPQYAASVFLGWATKKFGKRNTIWLFGPATTGKTNIAEAIAHTVPFYGCVNWTNENFPFNDCVDKMVIWWEEGKMTAKVVESAKAILGGSKVRVDQKCKSSAQIDPTPVIVTSNTNMCAVIDGNSTTFEHQQPLQDRMFKFELTRRLDHDFGKVTKQEVKDFFRWAKDHVVEVEHEFYVKKGGAKKRPAPSDADISEPKRVRESVAQPSTSDAEASINYADRYQNKCSRHVGMNLMLFPCRQCERMNQNSNICFTHGQKDCLECFPVSESQPVSVVKKAYQKLCYIHHIMGKVPDACTACDLVNVDLDDCIFEQ.

One can recognise a PV NS1-Nuc domain in the interval 1–199 (MPGFYEIVIK…AQHLTHVSQT (199 aa)). A divalent metal cation is bound by residues Glu83, His90, and His92. The short motif at 90–92 (HMH) is the RCR-2 element. Tyr156 (for nuclease activity) is an active-site residue. The RCR-3 signature appears at 156-160 (YLLPK). Residues 196–211 (VSQTQEQNKENQNPNS) show a composition bias toward polar residues. Residues 196-216 (VSQTQEQNKENQNPNSDAPVI) are disordered. Positions 308 to 463 (DPQYAASVFL…LDHDFGKVTK (156 aa)) constitute an SF3 helicase domain. 334 to 341 (GPATTGKT) contributes to the ATP binding site. The segment at 489–520 (GGAKKRPAPSDADISEPKRVRESVAQPSTSDA) is disordered.

In terms of assembly, hexamer when associated with the viral DNA ori sequence. Interacts with host PRKX. Interacts with host TOPORS. Interacts with host TBP and SUB1/PC4; these interactions play important roles in transcriptional regulation. A divalent metal cation is required as a cofactor.

Its subcellular location is the host nucleus. Functionally, plays an essential role in the initiation of viral DNA synthesis. Binds specifically to an inverted terminal repeat element (ITR) on the 3' and 5' ends of the viral DNA, where it cleaves a site specifically to generate a priming site for initiation of the synthesis of a complementary strand. Also plays a role as transcriptional regulator, DNA helicase and as key factors in site-specific integration of the viral genome. Regulates host PKA activity by interacting with host PRKX as a mechanism of interfering with helper virus propagation and promoting its own replication. Inhibits the host cell cycle G1/S, S and G2/M transitions. These arrests may provide essential cellular factors for viral DNA replication. The protein is Protein Rep78 (Rep78) of Adeno-associated virus 2 (isolate Srivastava/1982) (AAV-2).